An 831-amino-acid chain; its full sequence is Probable beta-glucosidase H (831 aa).

N-linked (GlcNAc...) asparagine glycosylation is present at asparagine 13. The active site involves aspartate 225. The region spanning 389–549 (RLLSNAVIHF…DAEEMINRAV (161 aa)) is the PA14 domain. 6 N-linked (GlcNAc...) asparagine glycosylation sites follow: asparagine 474, asparagine 514, asparagine 604, asparagine 629, asparagine 726, and asparagine 823.

Belongs to the glycosyl hydrolase 3 family.

Its subcellular location is the secreted. It carries out the reaction Hydrolysis of terminal, non-reducing beta-D-glucosyl residues with release of beta-D-glucose.. Its pathway is glycan metabolism; cellulose degradation. Beta-glucosidases are one of a number of cellulolytic enzymes involved in the degradation of cellulosic biomass. Catalyzes the last step releasing glucose from the inhibitory cellobiose. The protein is Probable beta-glucosidase H (bglH) of Emericella nidulans (strain FGSC A4 / ATCC 38163 / CBS 112.46 / NRRL 194 / M139) (Aspergillus nidulans).